The following is a 502-amino-acid chain: UPF0371 protein CLD_0424 (502 aa).

Belongs to the UPF0371 family.

This chain is UPF0371 protein CLD_0424, found in Clostridium botulinum (strain Okra / Type B1).